A 1022-amino-acid polypeptide reads, in one-letter code: Leucine--tRNA ligase (1022 aa).

The short motif at proline 47–histidine 57 is the 'HIGH' region element. A 'KMSKS' region motif is present at residues lysine 697–serine 701. Position 700 (lysine 700) interacts with ATP.

This sequence belongs to the class-I aminoacyl-tRNA synthetase family.

It localises to the cytoplasm. It catalyses the reaction tRNA(Leu) + L-leucine + ATP = L-leucyl-tRNA(Leu) + AMP + diphosphate. This Ignicoccus hospitalis (strain KIN4/I / DSM 18386 / JCM 14125) protein is Leucine--tRNA ligase.